The sequence spans 578 residues: Arginine--tRNA ligase (578 aa).

Positions 123-133 match the 'HIGH' region motif; that stretch reads PNIAKEMHVGH.

Belongs to the class-I aminoacyl-tRNA synthetase family. As to quaternary structure, monomer.

Its subcellular location is the cytoplasm. It catalyses the reaction tRNA(Arg) + L-arginine + ATP = L-arginyl-tRNA(Arg) + AMP + diphosphate. The polypeptide is Arginine--tRNA ligase (Baumannia cicadellinicola subsp. Homalodisca coagulata).